Consider the following 297-residue polypeptide: Transcription factor bHLH129 (297 aa).

The tract at residues 1-145 is disordered; it reads MYPPNSSKST…SSSHQEHNSL (145 aa). At Ser-35 the chain carries Phosphoserine. Residues 68–82 are compositionally biased toward low complexity; that stretch reads SSIGFDSNASSSSSL. Gly residues predominate over residues 111–121; that stretch reads PNGGYGGGGEQ. Residue Ser-138 is modified to Phosphoserine. One can recognise a bHLH domain in the interval 239–289; the sequence is FATHPRSIAERERRTRISGKLKKLQELVPNMDKQTSYADMLDLAVEHIKGL.

As to quaternary structure, homodimer.

Its subcellular location is the nucleus. The sequence is that of Transcription factor bHLH129 (BHLH129) from Arabidopsis thaliana (Mouse-ear cress).